A 426-amino-acid polypeptide reads, in one-letter code: 3-phosphoshikimate 1-carboxyvinyltransferase (426 aa).

3-phosphoshikimate contacts are provided by Lys-22, Ser-23, and Arg-27. Lys-22 serves as a coordination point for phosphoenolpyruvate. Positions 96 and 124 each coordinate phosphoenolpyruvate. Residues Ser-170, Ser-171, Gln-172, Ser-198, Asp-314, Asn-337, and Lys-341 each contribute to the 3-phosphoshikimate site. Gln-172 contributes to the phosphoenolpyruvate binding site. The active-site Proton acceptor is Asp-314. Phosphoenolpyruvate contacts are provided by Arg-345, Arg-387, and Lys-412.

The protein belongs to the EPSP synthase family. In terms of assembly, monomer.

The protein resides in the cytoplasm. The enzyme catalyses 3-phosphoshikimate + phosphoenolpyruvate = 5-O-(1-carboxyvinyl)-3-phosphoshikimate + phosphate. Its pathway is metabolic intermediate biosynthesis; chorismate biosynthesis; chorismate from D-erythrose 4-phosphate and phosphoenolpyruvate: step 6/7. Its function is as follows. Catalyzes the transfer of the enolpyruvyl moiety of phosphoenolpyruvate (PEP) to the 5-hydroxyl of shikimate-3-phosphate (S3P) to produce enolpyruvyl shikimate-3-phosphate and inorganic phosphate. This is 3-phosphoshikimate 1-carboxyvinyltransferase from Vibrio cholerae serotype O1 (strain ATCC 39541 / Classical Ogawa 395 / O395).